A 221-amino-acid chain; its full sequence is Serine protease inhibitor 7 (221 aa).

The N-terminal stretch at M1–T22 is a signal peptide. Residues S23–N28 constitute a propeptide that is removed on maturation. The short motif at N25–P30 is the Vacuolar targeting signal element. 2 disulfide bridges follow: C76–C125 and C174–C191.

It belongs to the protease inhibitor I3 (leguminous Kunitz-type inhibitor) family. In terms of tissue distribution, tubers. Not detected in root, stem, leaves or flower bud.

Its subcellular location is the vacuole. Functionally, inhibitor of trypsin (serine protease). May protect the plant by inhibiting proteases of invading organisms. This is Serine protease inhibitor 7 from Solanum tuberosum (Potato).